Consider the following 676-residue polypeptide: Urocanate hydratase (676 aa).

NAD(+) is bound by residues Gly-126–Gly-127, Gln-204, Gly-251–Ser-253, Glu-271, Asn-317–Val-318, Gln-343–His-347, Tyr-354–Tyr-355, and Tyr-403. Lys-534 bears the N6-succinyllysine mark. Gly-594 contributes to the NAD(+) binding site.

This sequence belongs to the urocanase family. NAD(+) is required as a cofactor.

It carries out the reaction 4-imidazolone-5-propanoate = trans-urocanate + H2O. The protein operates within amino-acid degradation; L-histidine degradation into L-glutamate; N-formimidoyl-L-glutamate from L-histidine: step 2/3. The sequence is that of Urocanate hydratase (Uroc1) from Mus musculus (Mouse).